Reading from the N-terminus, the 116-residue chain is MTSYCDTLKALAAESDSTGSERATIRMYMAMFSDASLRPAVSDTVASILGTDSLDHEDAEMMLKFKLLFFSGSANASATSHYPKADDPQRFARSVSRGPSRVRRPARNSASRPVRR.

The disordered stretch occupies residues serine 77–arginine 116.

This is an uncharacterized protein from Frog virus 3 (isolate Goorha) (FV-3).